The primary structure comprises 326 residues: MTTNTVVREAQSQAEYNPLAKQKAAAKLSRIPIKVEHGEALKKPDWIRVKAGSPTTRFYEIKDILRANKLHTVCEEASCPNIGECFGKGTATFMIMGDKCTRRCPFCDVGHGRPDPLDTNEPLNLAKTIAELRLKYVVITSVDRDDLRDGGSGHFVECIKNIRELSPLTQIEILVPDFRGRDDRALEILKAAPPDVMNHNLETAPRLYKEARPGSDYQFSLNLLKKFKALHPKVPTKSGIMVGLGETDEEILQVMRDMRAHDIDMLTIGQYLAPSNSHLPVRRYVHPDTFKMFEEEAYKMGFTHAAVGAMVRSSYHADQQAHAAGV.

[4Fe-4S] cluster-binding residues include C74, C79, C85, C100, C104, C107, and S314. The Radical SAM core domain maps to 85–303 (CFGKGTATFM…EEEAYKMGFT (219 aa)).

The protein belongs to the radical SAM superfamily. Lipoyl synthase family. [4Fe-4S] cluster is required as a cofactor.

The protein localises to the cytoplasm. It carries out the reaction [[Fe-S] cluster scaffold protein carrying a second [4Fe-4S](2+) cluster] + N(6)-octanoyl-L-lysyl-[protein] + 2 oxidized [2Fe-2S]-[ferredoxin] + 2 S-adenosyl-L-methionine + 4 H(+) = [[Fe-S] cluster scaffold protein] + N(6)-[(R)-dihydrolipoyl]-L-lysyl-[protein] + 4 Fe(3+) + 2 hydrogen sulfide + 2 5'-deoxyadenosine + 2 L-methionine + 2 reduced [2Fe-2S]-[ferredoxin]. The protein operates within protein modification; protein lipoylation via endogenous pathway; protein N(6)-(lipoyl)lysine from octanoyl-[acyl-carrier-protein]: step 2/2. Catalyzes the radical-mediated insertion of two sulfur atoms into the C-6 and C-8 positions of the octanoyl moiety bound to the lipoyl domains of lipoate-dependent enzymes, thereby converting the octanoylated domains into lipoylated derivatives. The sequence is that of Lipoyl synthase from Delftia acidovorans (strain DSM 14801 / SPH-1).